The primary structure comprises 334 residues: Ornithine carbamoyltransferase (334 aa).

Residues 57–60 (STRT), Gln84, Arg108, and 135–138 (HPTQ) contribute to the carbamoyl phosphate site. L-ornithine contacts are provided by residues Asn169, Asp233, and 237 to 238 (SM). Carbamoyl phosphate is bound by residues 275–276 (CL) and Arg320.

It belongs to the aspartate/ornithine carbamoyltransferase superfamily. OTCase family.

Its subcellular location is the cytoplasm. It carries out the reaction carbamoyl phosphate + L-ornithine = L-citrulline + phosphate + H(+). Its pathway is amino-acid biosynthesis; L-arginine biosynthesis; L-arginine from L-ornithine and carbamoyl phosphate: step 1/3. Its function is as follows. Reversibly catalyzes the transfer of the carbamoyl group from carbamoyl phosphate (CP) to the N(epsilon) atom of ornithine (ORN) to produce L-citrulline. The chain is Ornithine carbamoyltransferase from Vibrio campbellii (strain ATCC BAA-1116).